The following is a 1380-amino-acid chain: DNA-directed RNA polymerase subunit beta (1380 aa).

The protein belongs to the RNA polymerase beta chain family. In terms of assembly, the RNAP catalytic core consists of 2 alpha, 1 beta, 1 beta' and 1 omega subunit. When a sigma factor is associated with the core the holoenzyme is formed, which can initiate transcription.

The catalysed reaction is RNA(n) + a ribonucleoside 5'-triphosphate = RNA(n+1) + diphosphate. Functionally, DNA-dependent RNA polymerase catalyzes the transcription of DNA into RNA using the four ribonucleoside triphosphates as substrates. The protein is DNA-directed RNA polymerase subunit beta of Sinorhizobium medicae (strain WSM419) (Ensifer medicae).